Reading from the N-terminus, the 1190-residue chain is Pumilio homolog 1 (1190 aa).

4 disordered regions span residues 38–74 (LTSGPVGQQQPPQPPTHSALATGPHASPVGGSMGVAG), 491–531 (SNSA…QQTD), 611–675 (ANGP…NSSL), and 744–777 (GPVGMPLPSQGPSHSQTPPPSLSSHGSSTSLNLG). 4 stretches are compositionally biased toward low complexity: residues 491–508 (SNSASQQNNPQSQQGQQQ), 518–531 (PLTPNQNQQGQQTD), 628–675 (QQPQ…NSSL), and 765–777 (LSSHGSSTSLNLG). A PUM-HD domain is found at 830–1172 (GRSRLLEDFR…HILAKLEKYY (343 aa)). Pumilio repeat units lie at residues 850 to 885 (EIAGHIMEFSQDQHGSRFIQLKLERATPAERQLVFN), 886 to 921 (EILQAAYQLMVDVFGNYVIQKFFEFGSLEQKLALAE), 922 to 959 (RIRGHVLSLALQMYGCRVIQKALEFIPPDQQVINEMVR), 960 to 995 (ELDGHVLKCVKDQNGNHVVQKCIECVQPQSLQFIID), 996 to 1031 (AFKSQVFALSTHPYGCRVIQRILEHCLPEQTLPILE), 1032 to 1067 (ELHQHTEQLVQDQYGNYVIQHVLEHGRPEDKSKIVA), 1068 to 1103 (EIRGNVLVLSQHKFASNVVEKCVTHASRTERAMLID), and 1107 to 1146 (TMNDGPHSALYTMMKDQYANYVVQKMIDVAEPAQRKIVMH). Positions 865–869 (SRFIQ) are adenine-nucleotide binding in RNA target. The uracil-nucleotide binding in RNA target stretch occupies residues 901–905 (NYVIQ). The adenine-nucleotide binding in RNA target stretch occupies residues 937–941 (CRVIQ). A non-specific-nucleotide binding in RNA target region spans residues 975–979 (NHVVQ). Residues 1011-1015 (CRVIQ) are adenine-nucleotide binding in RNA target. Residues 1047–1051 (NYVIQ) form a uracil-nucleotide binding in RNA target region. The tract at residues 1083 to 1087 (SNVVE) is guanine-nucleotide binding in RNA target. The tract at residues 1126–1130 (NYVVQ) is uracil-nucleotide binding in RNA target.

Interacts with cpeb1-a; interacts with unphosphorylated cpeb1-a but not phosphorylated. Component of a complex with papd4, sympk, tacc3, parn, dazl and cpeb1. Post-translationally, phosphorylated. Phosphorylation takes place at the time of dissociation of cpeb1-a from pum1 and the translational activation of ccnb1 mRNA. In terms of tissue distribution, present in oocytes (at protein level).

It is found in the cytoplasm. It localises to the P-body. The protein localises to the cytoplasmic granule. In terms of biological role, sequence-specific RNA-binding protein that acts as a post-transcriptional repressor by binding the 3'-UTR of mRNA targets. Binds to an RNA consensus sequence, the Pumilio Response Element (PRE), 5'-UGUANAUA-3', that is related to the Nanos Response Element (NRE). Mediates post-transcriptional repression of transcripts via different mechanisms: acts via direct recruitment of deadenylase complexes leading to translational inhibition and mRNA degradation. Also mediates deadenylation-independent repression by promoting accessibility of miRNAs. Acts as a post-transcriptional repressor of ccnb1 mRNA during oocyte maturation. This is Pumilio homolog 1 from Xenopus laevis (African clawed frog).